The sequence spans 293 residues: MPELPEVETVRRGLQPVMEGAKIVAAEARRGDLRFPFQPDFAKRLQGQTVRGLGRRAKYLLADLSSGDVLLMHLGMSGSFRVIKQDDEETPGEFHYPRGKDSVHDHVVFHMSSGADIVFNDPRRFGFMKIIGRGEIEREPHLKDLGPEPLGNEFDAAMLATACAGKKTSLKAALLDQRVVAGLGNIYVCEALFRAHLSPRRLAATLATRKGEPTDHARRLVEAIHAVLNEAIRAGGSSLRDHRQTSGELGYFQHSFQVYDREGEPCRTDGCGGVVKRFVQNGRSTFWCPKCQR.

Pro-2 acts as the Schiff-base intermediate with DNA in catalysis. Glu-3 (proton donor) is an active-site residue. Catalysis depends on Lys-58, which acts as the Proton donor; for beta-elimination activity. DNA is bound by residues His-104, Arg-123, and Lys-166. An FPG-type zinc finger spans residues 257 to 293 (QVYDREGEPCRTDGCGGVVKRFVQNGRSTFWCPKCQR). Residue Arg-283 is the Proton donor; for delta-elimination activity of the active site.

It belongs to the FPG family. Monomer. It depends on Zn(2+) as a cofactor.

It carries out the reaction Hydrolysis of DNA containing ring-opened 7-methylguanine residues, releasing 2,6-diamino-4-hydroxy-5-(N-methyl)formamidopyrimidine.. It catalyses the reaction 2'-deoxyribonucleotide-(2'-deoxyribose 5'-phosphate)-2'-deoxyribonucleotide-DNA = a 3'-end 2'-deoxyribonucleotide-(2,3-dehydro-2,3-deoxyribose 5'-phosphate)-DNA + a 5'-end 5'-phospho-2'-deoxyribonucleoside-DNA + H(+). Involved in base excision repair of DNA damaged by oxidation or by mutagenic agents. Acts as a DNA glycosylase that recognizes and removes damaged bases. Has a preference for oxidized purines, such as 7,8-dihydro-8-oxoguanine (8-oxoG). Has AP (apurinic/apyrimidinic) lyase activity and introduces nicks in the DNA strand. Cleaves the DNA backbone by beta-delta elimination to generate a single-strand break at the site of the removed base with both 3'- and 5'-phosphates. In Bradyrhizobium sp. (strain BTAi1 / ATCC BAA-1182), this protein is Formamidopyrimidine-DNA glycosylase.